The following is a 239-amino-acid chain: Ubiquinone biosynthesis O-methyltransferase (239 aa).

The S-adenosyl-L-methionine site is built by arginine 44, glycine 63, aspartate 84, and methionine 128.

Belongs to the methyltransferase superfamily. UbiG/COQ3 family.

The catalysed reaction is a 3-demethylubiquinol + S-adenosyl-L-methionine = a ubiquinol + S-adenosyl-L-homocysteine + H(+). The enzyme catalyses a 3-(all-trans-polyprenyl)benzene-1,2-diol + S-adenosyl-L-methionine = a 2-methoxy-6-(all-trans-polyprenyl)phenol + S-adenosyl-L-homocysteine + H(+). It functions in the pathway cofactor biosynthesis; ubiquinone biosynthesis. In terms of biological role, O-methyltransferase that catalyzes the 2 O-methylation steps in the ubiquinone biosynthetic pathway. This Xanthomonas euvesicatoria pv. vesicatoria (strain 85-10) (Xanthomonas campestris pv. vesicatoria) protein is Ubiquinone biosynthesis O-methyltransferase.